A 387-amino-acid chain; its full sequence is MNTVVIVDCLRTPMGRSKGGAFRHQRAEDLSAHLMKGILARNPQVNPKEIEDIYWGCVQQTLEQGFNVARNAALLAGLPIEIGAVTVNRLCGSSMQALHDAARAIMVGDAEICLVGGVEHMGHVPMTHGVDFHPGLSKNVAKAAGMMGLTAEMLGKLHGISRQQQDEFAARSHARAHAATLEGRFKNEILPTEGHAADGTLFTLDYDEVIRPETTVAGLAELRPVFDPANGTVTAGTSSALSDGASAMLVMSEQKAKALGLTIRARIKAMAVAGCDPSIMGYGPVPATHKALQRAGLTMQDMDVVELNEAFAAQSLPCAKDLGLLEMMDDKVNLNGGAIALGHPLGCSGTRISTTLINLMEAKDAKYGLATMCIGLGQGIATIFERP.

Catalysis depends on cysteine 91, which acts as the Acyl-thioester intermediate. Catalysis depends on proton acceptor residues histidine 343 and cysteine 373.

The protein belongs to the thiolase-like superfamily. Thiolase family. Heterotetramer of two alpha chains (FadB) and two beta chains (FadA).

It is found in the cytoplasm. The enzyme catalyses an acyl-CoA + acetyl-CoA = a 3-oxoacyl-CoA + CoA. It participates in lipid metabolism; fatty acid beta-oxidation. In terms of biological role, catalyzes the final step of fatty acid oxidation in which acetyl-CoA is released and the CoA ester of a fatty acid two carbons shorter is formed. In Vibrio cholerae serotype O1 (strain ATCC 39315 / El Tor Inaba N16961), this protein is 3-ketoacyl-CoA thiolase.